The following is a 460-amino-acid chain: NADH-ubiquinone oxidoreductase chain 4 (460 aa).

The next 12 membrane-spanning stretches (helical) occupy residues 20-42 (PKWL…LTWL), 61-81 (PLST…VLAS), 93-113 (QRLY…AFGA), 114-134 (TEII…LIII), 148-168 (TYFL…LLLL), 195-215 (IWWA…GVHL), 225-245 (PVAG…YGMM), 258-278 (LAYP…SICL), 285-304 (SLIA…GILI), 309-331 (GFTG…FCLA), 351-371 (MIFP…LALP), and 394-414 (IILT…LFLM).

The protein belongs to the complex I subunit 4 family.

The protein localises to the mitochondrion membrane. It catalyses the reaction a ubiquinone + NADH + 5 H(+)(in) = a ubiquinol + NAD(+) + 4 H(+)(out). In terms of biological role, core subunit of the mitochondrial membrane respiratory chain NADH dehydrogenase (Complex I) that is believed to belong to the minimal assembly required for catalysis. Complex I functions in the transfer of electrons from NADH to the respiratory chain. The immediate electron acceptor for the enzyme is believed to be ubiquinone. This Formosania lacustris (Oriental stream loach) protein is NADH-ubiquinone oxidoreductase chain 4 (MT-ND4).